The sequence spans 450 residues: Signal recognition particle protein (450 aa).

GTP contacts are provided by residues 107-114 (GLQGSGKT), 190-194 (DTAGR), and 248-251 (TKTD).

This sequence belongs to the GTP-binding SRP family. SRP54 subfamily. Part of the signal recognition particle protein translocation system, which is composed of SRP and FtsY. SRP is a ribonucleoprotein composed of Ffh and a 4.5S RNA molecule.

The protein resides in the cytoplasm. The enzyme catalyses GTP + H2O = GDP + phosphate + H(+). Functionally, involved in targeting and insertion of nascent membrane proteins into the cytoplasmic membrane. Binds to the hydrophobic signal sequence of the ribosome-nascent chain (RNC) as it emerges from the ribosomes. The SRP-RNC complex is then targeted to the cytoplasmic membrane where it interacts with the SRP receptor FtsY. Interaction with FtsY leads to the transfer of the RNC complex to the Sec translocase for insertion into the membrane, the hydrolysis of GTP by both Ffh and FtsY, and the dissociation of the SRP-FtsY complex into the individual components. This Buchnera aphidicola subsp. Baizongia pistaciae (strain Bp) protein is Signal recognition particle protein.